Consider the following 91-residue polypeptide: DNA-binding protein HU (91 aa).

The protein belongs to the bacterial histone-like protein family.

Its function is as follows. Histone-like DNA-binding protein which is capable of wrapping DNA to stabilize it, and thus to prevent its denaturation under extreme environmental conditions. Also seems to act as a fortuitous virulence factor in delayed sequelae by binding to heparan sulfate-proteoglycans in the extracellular matrix of target organs and acting as a nidus for in situ immune complex formation. This is DNA-binding protein HU (hup) from Streptococcus mutans serotype c (strain ATCC 700610 / UA159).